Consider the following 518-residue polypeptide: AarF domain-containing kinase 1 (518 aa).

One can recognise a Protein kinase domain in the interval S149–A468. ATP contacts are provided by residues L155–V163 and K177. D309 (proton acceptor) is an active-site residue.

This sequence belongs to the protein kinase superfamily. ADCK protein kinase family.

The protein resides in the mitochondrion. In terms of biological role, essential for maintaining mitochondrial cristae formation and mitochondrial function by acting via YME1L to regulate the mitochondrial structural proteins Opa1 and Mitofilin. This function is likely to be kinase-independent. Functions in tracheal development and larval molting probably by acting in sterol modification and/or intracellular lipid trafficking. The action of this enzyme is not yet clear. It is not known if it has protein kinase activity and what type of substrate it would phosphorylate (Ser, Thr or Tyr). The protein is AarF domain-containing kinase 1 of Drosophila melanogaster (Fruit fly).